The chain runs to 554 residues: uncharacterized protein (554 aa).

Positions 1–33 (MKKILIIILFIIIFIVLIYSGLWFVIMFSLSHS) are cleaved as a signal peptide.

This is an uncharacterized protein from Rickettsia prowazekii (strain Madrid E).